Reading from the N-terminus, the 416-residue chain is MFSKSVTLAQYDPDLAAAIAQEDRRQQDHVELIASENYVSCAVMEAQGSQLTNKYAEGYPAKRYYGGCEYVDIVEQLAIDRVKELFGAAYANVQPHSGSQANQAVYASVLKPGDTILGMSLAHGGHLTHGASVNISGKLYNAVTYGLDENEVLDYAEVERLALEHKPKMIVAGASAYALQIDWAKFREIADKVGAYLFVDMAHYAGLVAGGEYPNPVPFCDFVTTTTHKTLRGPRGGVILCRDNTHEKALNSSIFPSLQGGPLMHVIAAKAVAFKEALQPEFKQYAKQVKINAAVMAEELVKRGLRIVSGRTESHVFLVDLQPMKITGKAAEAALGKAHITVNKNAIPNDPEKPFVTSGIRIGSAAMTTRGFNETDARVLSNLVADVLANPEDEANLAKVCGQVTALCDKYPVYGN.

(6S)-5,6,7,8-tetrahydrofolate is bound by residues Leu121 and Gly125 to Leu127. At Lys229 the chain carries N6-(pyridoxal phosphate)lysine.

This sequence belongs to the SHMT family. In terms of assembly, homodimer. Pyridoxal 5'-phosphate is required as a cofactor.

Its subcellular location is the cytoplasm. It catalyses the reaction (6R)-5,10-methylene-5,6,7,8-tetrahydrofolate + glycine + H2O = (6S)-5,6,7,8-tetrahydrofolate + L-serine. Its pathway is one-carbon metabolism; tetrahydrofolate interconversion. The protein operates within amino-acid biosynthesis; glycine biosynthesis; glycine from L-serine: step 1/1. In terms of biological role, catalyzes the reversible interconversion of serine and glycine with tetrahydrofolate (THF) serving as the one-carbon carrier. This reaction serves as the major source of one-carbon groups required for the biosynthesis of purines, thymidylate, methionine, and other important biomolecules. Also exhibits THF-independent aldolase activity toward beta-hydroxyamino acids, producing glycine and aldehydes, via a retro-aldol mechanism. This is Serine hydroxymethyltransferase from Neisseria gonorrhoeae.